Here is a 263-residue protein sequence, read N- to C-terminus: uncharacterized protein (263 aa).

Residue 17 to 41 (GGGRGLGAAIALAFAQAGADVLIAS) participates in NAD(+) binding. Residue Ser147 participates in substrate binding. The Proton acceptor role is filled by Tyr160. Lys164 serves as a coordination point for NAD(+).

It belongs to the short-chain dehydrogenases/reductases (SDR) family.

This is an uncharacterized protein from Mycobacterium tuberculosis (strain CDC 1551 / Oshkosh).